Reading from the N-terminus, the 349-residue chain is Magnesium-protoporphyrin IX monomethyl ester [oxidative] cyclase (349 aa).

Belongs to the AcsF family. Requires Fe cation as cofactor.

The protein localises to the plastid. It localises to the chloroplast. It carries out the reaction Mg-protoporphyrin IX 13-monomethyl ester + 3 NADPH + 3 O2 + 2 H(+) = 3,8-divinyl protochlorophyllide a + 3 NADP(+) + 5 H2O. The protein operates within porphyrin-containing compound metabolism; chlorophyll biosynthesis (light-independent). Its function is as follows. Catalyzes the formation of the isocyclic ring in chlorophyll biosynthesis. Mediates the cyclase reaction, which results in the formation of divinylprotochlorophyllide (Pchlide) characteristic of all chlorophylls from magnesium-protoporphyrin IX 13-monomethyl ester (MgPMME). This is Magnesium-protoporphyrin IX monomethyl ester [oxidative] cyclase from Pyropia yezoensis (Susabi-nori).